The chain runs to 367 residues: Apurinic-apyrimidinic endonuclease 1 (367 aa).

Residues H83, H123, E158, D192, H195, H229, D242, H244, and E274 each contribute to the Zn(2+) site. Positions 312–367 are disordered; it reads DTLQKLGAKSRKEQLDKFEVKQKKRAGGTKRKKATAEPSDNDILSQMTKKRKTKKE. A compositionally biased stretch (basic and acidic residues) spans 321–332; that stretch reads SRKEQLDKFEVK. Basic residues predominate over residues 333–344; sequence QKKRAGGTKRKK. S356 is subject to Phosphoserine.

Belongs to the AP endonuclease 2 family. Monomer. The cofactor is Zn(2+).

It localises to the nucleus. Functionally, DNA repair enzyme that cleaves apurinic/apyrimidinic (AP) sites and removes 3'-blocking groups present at single strand breaks of damaged DNA. APN1 accounts for &gt; 97% of both apurinic/apyrimidinic (AP) endonuclease and DNA 3'-repair diesterase activities. The sequence is that of Apurinic-apyrimidinic endonuclease 1 (APN1) from Saccharomyces cerevisiae (strain ATCC 204508 / S288c) (Baker's yeast).